A 608-amino-acid polypeptide reads, in one-letter code: UvrABC system protein C (608 aa).

In terms of domain architecture, GIY-YIG spans 16–94 (NRPGVYRMFD…IKEWRPPYNI (79 aa)). A UVR domain is found at 204–239 (NALADELNTGMEQAAMRLDFEKAAELRDQVAILRRV).

The protein belongs to the UvrC family. As to quaternary structure, interacts with UvrB in an incision complex.

The protein localises to the cytoplasm. The UvrABC repair system catalyzes the recognition and processing of DNA lesions. UvrC both incises the 5' and 3' sides of the lesion. The N-terminal half is responsible for the 3' incision and the C-terminal half is responsible for the 5' incision. This chain is UvrABC system protein C, found in Pseudomonas paraeruginosa (strain DSM 24068 / PA7) (Pseudomonas aeruginosa (strain PA7)).